The following is a 479-amino-acid chain: D-alanyl-D-alanine carboxypeptidase DacB (479 aa).

An N-terminal signal peptide occupies residues 1–26 (MKKLSSISTALGSFLLSVSFSLPTFA). Ser69 serves as the catalytic Acyl-ester intermediate. The active-site Proton acceptor is Lys72. Residue Ser310 is part of the active site. Lys420 contributes to the substrate binding site.

The protein belongs to the peptidase S13 family.

The protein resides in the periplasm. It carries out the reaction Preferential cleavage: (Ac)2-L-Lys-D-Ala-|-D-Ala. Also transpeptidation of peptidyl-alanyl moieties that are N-acyl substituents of D-alanine.. It functions in the pathway cell wall biogenesis; peptidoglycan biosynthesis. In terms of biological role, not involved in transpeptidation but exclusively catalyzes a DD-carboxypeptidase and DD-endopeptidase reaction. The polypeptide is D-alanyl-D-alanine carboxypeptidase DacB (dacB) (Haemophilus influenzae (strain ATCC 51907 / DSM 11121 / KW20 / Rd)).